The chain runs to 525 residues: Serine/threonine protein phosphatase 2A 55 kDa regulatory subunit B beta isoform (525 aa).

Positions 1 to 30 are disordered; that stretch reads MDPSSKSPDDDDLRPEAEAARRPQPQPQPR. 2 WD repeats span residues 48–87 and 124–165; these read QEVD…DSAS and EIEE…VKRI. The disordered stretch occupies residues 169–191; sequence NLNTSQSSGNGTTSSSSSSSSRA. The span at 171–189 shows a compositional bias: low complexity; that stretch reads NTSQSSGNGTTSSSSSSSS. WD repeat units lie at residues 244–282, 293–333, 352–390, and 495–525; these read AHDY…QSFN, DLTE…LCDN, EIIA…GPVA, and DLST…MYYA.

This sequence belongs to the phosphatase 2A regulatory subunit B family. In terms of assembly, PP2A consists of a common heteromeric enzyme, composed of a catalytic subunit (subunits C), a constant regulatory subunit (subunit A), and a variety of regulatory subunits such as subunits B (the R2/B/PR55/B55, R3/B''/PR72/PR130/PR59 and R5/B'/B56 families).

In terms of biological role, the B regulatory subunit may modulate substrate selectivity and catalytic activity, and may also direct the localization of the catalytic enzyme to a particular subcellular compartment. In Oryza sativa subsp. japonica (Rice), this protein is Serine/threonine protein phosphatase 2A 55 kDa regulatory subunit B beta isoform.